A 320-amino-acid polypeptide reads, in one-letter code: Cytochrome f (320 aa).

The N-terminal stretch at 1–35 is a signal peptide; sequence MHTKNLFYSRTQQITQYLSALLMMVILTRTSISSA. The heme site is built by tyrosine 36, cysteine 56, cysteine 59, and histidine 60. A helical membrane pass occupies residues 286-306; that stretch reads VQVLLFFFASIILAQIFLVLK.

It belongs to the cytochrome f family. As to quaternary structure, the 4 large subunits of the cytochrome b6-f complex are cytochrome b6, subunit IV (17 kDa polypeptide, petD), cytochrome f and the Rieske protein, while the 4 small subunits are PetG, PetL, PetM and PetN. The complex functions as a dimer. Requires heme as cofactor.

The protein localises to the plastid thylakoid membrane. Component of the cytochrome b6-f complex, which mediates electron transfer between photosystem II (PSII) and photosystem I (PSI), cyclic electron flow around PSI, and state transitions. This is Cytochrome f from Cuscuta gronovii (Common dodder).